The primary structure comprises 675 residues: Vitamin K-dependent protein S (675 aa).

An N-terminal signal peptide occupies residues 1–24 (MRVLSARFRVLLACLALVIPVSET). Residues 25 to 41 (NFLSKERASQVLVRKRR) constitute a propeptide that is removed on maturation. The Gla domain maps to 42–87 (ANTLFEETMKGNLERECIEELCNKEEAREVFENNPETDYFYPKYLG). 4-carboxyglutamate occurs at positions 47, 48, 55, 57, 60, 61, 66, 67, 70, 73, and 77. A disulfide bond links Cys58 and Cys63. The segment at 88-116 (CLGAFRVGSFHAARQSANAYPDLRSCVKA) is thrombin-sensitive. Positions 117–155 (ISDQCDPIPCNEDGYLACQDGQAAFTCFCKPGWQGDRCQ) constitute an EGF-like 1 domain. 13 cysteine pairs are disulfide-bonded: Cys121-Cys134, Cys126-Cys143, Cys145-Cys154, Cys161-Cys175, Cys171-Cys184, Cys186-Cys199, Cys205-Cys217, Cys212-Cys226, Cys228-Cys241, Cys247-Cys256, Cys252-Cys265, Cys267-Cys282, and Cys449-Cys475. A (3R)-3-hydroxyaspartate modification is found at Asp136. In terms of domain architecture, EGF-like 2; calcium-binding spans 157–200 (DVNECKDPSNVNGGCSQICDNTPGSYHCSCKRGFAMLPNKKDCK). Positions 201–242 (DLDECALKPSVCGTAVCKNIPGDFECECPDGYRYDPSSKSCK) constitute an EGF-like 3; calcium-binding domain. The region spanning 243–283 (DVDECSENMCAQLCVNFPGGYSCYCDGKKGFKLAQDQKSCE) is the EGF-like 4; calcium-binding domain. 2 Laminin G-like domains span residues 299–475 (LLYL…NKHC) and 484–665 (YYPG…AHSC). Residues Asn499 and Asn509 are each glycosylated (N-linked (GlcNAc...) asparagine). Cysteines 638 and 665 form a disulfide.

In terms of processing, the iron and 2-oxoglutarate dependent 3-hydroxylation of aspartate and asparagine is (R) stereospecific within EGF domains. In terms of tissue distribution, plasma.

It localises to the secreted. Functionally, anticoagulant plasma protein; it is a cofactor to activated protein C in the degradation of coagulation factors Va and VIIIa. It helps to prevent coagulation and stimulating fibrinolysis. The sequence is that of Vitamin K-dependent protein S (Pros1) from Mus musculus (Mouse).